A 206-amino-acid polypeptide reads, in one-letter code: Ran-specific GTPase-activating protein (206 aa).

Residues 1 to 26 (MAAAKDTHEDHDTSTENADESNHDPQ) show a composition bias toward basic and acidic residues. The disordered stretch occupies residues 1–33 (MAAAKDTHEDHDTSTENADESNHDPQFEPIVSL). Alanine 2 carries the N-acetylalanine modification. Threonine 13 bears the Phosphothreonine mark. Phosphoserine is present on residues serine 21 and serine 60. The region spanning 26–164 (QFEPIVSLPE…FEECRKEIEE (139 aa)) is the RanBD1 domain. Lysine 150 bears the N6-acetyllysine; alternate mark. Residue lysine 150 is modified to N6-succinyllysine; alternate. Residues 162–184 (IEEKEKKGSGKNDSTEKVVEKLE) show a composition bias toward basic and acidic residues. Residues 162–206 (IEEKEKKGSGKNDSTEKVVEKLEALSVQEGEQPQDAAPAAVEEEQ) form a disordered region. The residue at position 182 (lysine 182) is an N6-acetyllysine. Serine 187 bears the Phosphoserine mark.

The protein belongs to the RANBP1 family. In terms of assembly, interacts with RAN (via C-terminus of GTP-bound form) but not with GDP-bound RAN. Identified in a complex composed of RAN, RANGAP1 and RANBP1. Identified in a complex that contains TNPO1, RAN and RANBP1. Identified in a complex that contains CSE1L, KPNA2, RAN and RANBP1. Identified in a complex with nucleotide-free RAN and RCC1.

Functionally, plays a role in RAN-dependent nucleocytoplasmic transport. Alleviates the TNPO1-dependent inhibition of RAN GTPase activity and mediates the dissociation of RAN from proteins involved in transport into the nucleus. Induces a conformation change in the complex formed by XPO1 and RAN that triggers the release of the nuclear export signal of cargo proteins. Promotes the disassembly of the complex formed by RAN and importin beta. Promotes dissociation of RAN from a complex with KPNA2 and CSE1L. Required for normal mitotic spindle assembly and normal progress through mitosis via its effect on RAN. Does not increase the RAN GTPase activity by itself, but increases GTP hydrolysis mediated by RANGAP1. Inhibits RCC1-dependent exchange of RAN-bound GDP by GTP. The chain is Ran-specific GTPase-activating protein (RANBP1) from Bos taurus (Bovine).